The primary structure comprises 620 residues: 1-deoxy-D-xylulose-5-phosphate synthase (620 aa).

Thiamine diphosphate is bound by residues H80 and 121-123 (GHS). D152 lines the Mg(2+) pocket. Thiamine diphosphate contacts are provided by residues 153–154 (GA), N181, Y288, and E370. N181 is a binding site for Mg(2+).

This sequence belongs to the transketolase family. DXPS subfamily. As to quaternary structure, homodimer. The cofactor is Mg(2+). Requires thiamine diphosphate as cofactor.

It carries out the reaction D-glyceraldehyde 3-phosphate + pyruvate + H(+) = 1-deoxy-D-xylulose 5-phosphate + CO2. Its pathway is metabolic intermediate biosynthesis; 1-deoxy-D-xylulose 5-phosphate biosynthesis; 1-deoxy-D-xylulose 5-phosphate from D-glyceraldehyde 3-phosphate and pyruvate: step 1/1. Its function is as follows. Catalyzes the acyloin condensation reaction between C atoms 2 and 3 of pyruvate and glyceraldehyde 3-phosphate to yield 1-deoxy-D-xylulose-5-phosphate (DXP). The polypeptide is 1-deoxy-D-xylulose-5-phosphate synthase (Cronobacter sakazakii (strain ATCC BAA-894) (Enterobacter sakazakii)).